Here is a 441-residue protein sequence, read N- to C-terminus: MKKFFQEIKADIKFKSAGPGQKLTESVGEKAPKEKPSQPPVRQPRQGPTNEAQMAAAAALARLEQKQPRARGPTSQDSIRNQVRKELRAEAAVSGDPEAPGSNTAPEPKEEGSAHLAVPGVYFTCPLTGAILRKDQRDARIREAILMHFSTDPVAASIMKIHTFNKDRDRVKLGVDTIAKYLDNIHLHPEEEKYRKIKVQNKVFQERIHCLEGTHEFFEAIGFQKVLLPIPDQEGPEEFYVLSEAALAQPQSLEWHKEQLLSAEPVRATLARQRRVFRPSTLASQFDLPADFFNLTAEEIKREQRLRSEAVERLSVLRTKAMREREEQREMRKYTYTLLRVRLPDGCLLQGTFYARERVAALYGFVREALQNDWLPFELLASGGQKLSEDENLAFNECGLVPSALLTFSLDAAVLEDIRAAGTQPDTSILKPELLSAIEKL.

The mediates interaction with LMAN1 stretch occupies residues 1–10 (MKKFFQEIKA). Disordered stretches follow at residues 12–57 (IKFK…MAAA), 62–81 (RLEQ…SIRN), and 86–113 (ELRA…EEGS). The segment covering 27 to 36 (VGEKAPKEKP) has biased composition (basic and acidic residues). The VCP/p97-interacting motif (VIM) stretch occupies residues 51–63 (EAQMAAAAALARL). The 70-residue stretch at 175-244 (VDTIAKYLDN…GPEEFYVLSE (70 aa)) folds into the PUB domain. A UBX domain is found at 332–408 (RKYTYTLLRV…GLVPSALLTF (77 aa)).

Interacts with VCP through the PUB domain (via C-terminus) and VIM motif (via N-terminus); the interaction is direct. Forms a ternary complex with CAV1 and VCP. Interacts with SYVN1. Interacts with HERPUD1. Interacts with VCPKMT. May interact with DERL1. Interacts with PLAA, VCP and YOD1; may form a complex involved in macroautophagy. Interacts with LMAN1.

It localises to the cytoplasm. The protein localises to the cytosol. Its subcellular location is the membrane. It is found in the nucleus. The protein resides in the cytoskeleton. It localises to the microtubule organizing center. The protein localises to the centrosome. Its subcellular location is the early endosome membrane. It is found in the late endosome membrane. The protein resides in the lysosome membrane. Its function is as follows. May negatively regulate the ATPase activity of VCP, an ATP-driven segregase that associates with different cofactors to control a wide variety of cellular processes. As a cofactor of VCP, it may play a role in the transport of CAV1 to lysosomes for degradation. It may also play a role in endoplasmic reticulum-associated degradation (ERAD) of misfolded proteins. Together with VCP and other cofactors, it may play a role in macroautophagy, regulating for instance the clearance of damaged lysosomes. This is UBX domain-containing protein 6 from Bos taurus (Bovine).